Reading from the N-terminus, the 490-residue chain is Betaine aldehyde dehydrogenase (490 aa).

Residues T26, I27, and D93 each coordinate K(+). 150 to 152 lines the NAD(+) pocket; the sequence is GAW. Residue K162 is the Charge relay system of the active site. Residue 176 to 179 participates in NAD(+) binding; the sequence is KPSE. Position 180 (V180) interacts with K(+). 230-233 lines the NAD(+) pocket; sequence GVAS. Residue L246 coordinates K(+). Residue E252 is the Proton acceptor of the active site. G254, C286, and E387 together coordinate NAD(+). Catalysis depends on C286, which acts as the Nucleophile. At C286 the chain carries Cysteine sulfenic acid (-SOH). K(+)-binding residues include K457 and G460. E464 acts as the Charge relay system in catalysis.

This sequence belongs to the aldehyde dehydrogenase family. In terms of assembly, dimer of dimers. K(+) is required as a cofactor.

The catalysed reaction is betaine aldehyde + NAD(+) + H2O = glycine betaine + NADH + 2 H(+). It functions in the pathway amine and polyamine biosynthesis; betaine biosynthesis via choline pathway; betaine from betaine aldehyde: step 1/1. Involved in the biosynthesis of the osmoprotectant glycine betaine. Catalyzes the irreversible oxidation of betaine aldehyde to the corresponding acid. The chain is Betaine aldehyde dehydrogenase from Escherichia coli O6:K15:H31 (strain 536 / UPEC).